A 114-amino-acid polypeptide reads, in one-letter code: Lymphotactin (114 aa).

Positions 1 to 21 (MRLLILALLGICSLTAYIVEG) are cleaved as a signal peptide. C32 and C69 are oxidised to a cystine. A disordered region spans residues 91–114 (RNNMIQTKPTGTQQSTNTAVTLTG).

This sequence belongs to the intercrine gamma family. As to expression, highest level in spleen, lower in peripheral leukocytes and very low levels in lung, colon and small intestine.

It localises to the secreted. Its function is as follows. Chemotactic activity for lymphocytes but not for monocytes or neutrophils. In thymus, mediates medullary accumulation of thymic dendritic cells and contributes to regulatoy T cell development, playing a role in self-tolerance establishment. In Homo sapiens (Human), this protein is Lymphotactin (XCL1).